A 155-amino-acid polypeptide reads, in one-letter code: SsrA-binding protein (155 aa).

This sequence belongs to the SmpB family.

It is found in the cytoplasm. Required for rescue of stalled ribosomes mediated by trans-translation. Binds to transfer-messenger RNA (tmRNA), required for stable association of tmRNA with ribosomes. tmRNA and SmpB together mimic tRNA shape, replacing the anticodon stem-loop with SmpB. tmRNA is encoded by the ssrA gene; the 2 termini fold to resemble tRNA(Ala) and it encodes a 'tag peptide', a short internal open reading frame. During trans-translation Ala-aminoacylated tmRNA acts like a tRNA, entering the A-site of stalled ribosomes, displacing the stalled mRNA. The ribosome then switches to translate the ORF on the tmRNA; the nascent peptide is terminated with the 'tag peptide' encoded by the tmRNA and targeted for degradation. The ribosome is freed to recommence translation, which seems to be the essential function of trans-translation. This chain is SsrA-binding protein, found in Bacillus cereus (strain G9842).